The chain runs to 293 residues: uncharacterized protein (293 aa).

Residue glutamate 47 is part of the active site.

This sequence belongs to the PhzF family.

This is an uncharacterized protein from Bacillus subtilis (strain 168).